The chain runs to 133 residues: Small ribosomal subunit protein eS17 (133 aa).

This sequence belongs to the eukaryotic ribosomal protein eS17 family.

This is Small ribosomal subunit protein eS17 (RpS17) from Spodoptera frugiperda (Fall armyworm).